The primary structure comprises 629 residues: DNA-directed RNA polymerase subunit beta' (629 aa).

Residues cysteine 70, cysteine 72, cysteine 85, and cysteine 88 each coordinate Zn(2+). Positions 472, 474, and 476 each coordinate Mg(2+).

It belongs to the RNA polymerase beta' chain family. RpoC1 subfamily. In plastids the minimal PEP RNA polymerase catalytic core is composed of four subunits: alpha, beta, beta', and beta''. When a (nuclear-encoded) sigma factor is associated with the core the holoenzyme is formed, which can initiate transcription. The cofactor is Mg(2+). Zn(2+) is required as a cofactor.

Its subcellular location is the plastid. The protein localises to the chloroplast. The enzyme catalyses RNA(n) + a ribonucleoside 5'-triphosphate = RNA(n+1) + diphosphate. Its function is as follows. DNA-dependent RNA polymerase catalyzes the transcription of DNA into RNA using the four ribonucleoside triphosphates as substrates. The polypeptide is DNA-directed RNA polymerase subunit beta' (Porphyra purpurea (Red seaweed)).